The chain runs to 116 residues: Large ribosomal subunit protein uL18 (116 aa).

The protein belongs to the universal ribosomal protein uL18 family. In terms of assembly, part of the 50S ribosomal subunit; part of the 5S rRNA/L5/L18/L25 subcomplex. Contacts the 5S and 23S rRNAs.

This is one of the proteins that bind and probably mediate the attachment of the 5S RNA into the large ribosomal subunit, where it forms part of the central protuberance. This Mycoplasma pneumoniae (strain ATCC 29342 / M129 / Subtype 1) (Mycoplasmoides pneumoniae) protein is Large ribosomal subunit protein uL18.